The sequence spans 136 residues: Small integral membrane protein 23 (136 aa).

The Cytoplasmic portion of the chain corresponds to 1 to 31 (MTIQKTGCRGREAAEVVEQRRRSHHCDDRKQ). The chain crosses the membrane as a helical; Signal-anchor for type II membrane protein span at residues 32 to 52 (TLLALLILVLYLGMGISGSSW). The Extracellular portion of the chain corresponds to 53-136 (EVSGQTKDCN…DLRPEDPCFT (84 aa)). Residues 92–124 (LKINLHGFLEKLEKEVRELEQLVRDLEFWLDAL) are a coiled coil.

Its subcellular location is the membrane. In Mus musculus (Mouse), this protein is Small integral membrane protein 23 (Smim23).